The following is a 325-amino-acid chain: SAM pointed domain-containing Ets transcription factor (325 aa).

Disordered stretches follow at residues 27 to 50 (GTEKAASGAMGPEKQEWSPSPPAT) and 79 to 100 (ARAGEDHPEEPEQCPVIDSQAS). The region spanning 119–203 (EVLKDIETAC…AHLDIWKSAA (85 aa)) is the PNT domain. The ETS DNA-binding region spans 239-322 (IHLWQFLKEL…ISQRLVYQFV (84 aa)).

Belongs to the ETS family. As to quaternary structure, interacts with the DNA-binding domain of the androgen receptor. Interacts with NKX3-1. As to expression, expressed in the accessory glands of sex organs including the prostate, seminal vesicle, coagulating gland in males, the oviduct in females, and in intestines. Expression is epithelial-specific.

The protein localises to the nucleus. May function as an androgen-independent transactivator of the prostate-specific antigen (PSA) promoter. Binds to 5'-GGAT-3' DNA sequences. May play a role in the regulation of the prostate gland and/or prostate cancer development. Acts as a transcriptional activator for SERPINB5 promoter. The sequence is that of SAM pointed domain-containing Ets transcription factor (Spdef) from Mus musculus (Mouse).